A 735-amino-acid chain; its full sequence is Ribosomal protein S6 kinase alpha-1 (735 aa).

A Phosphoserine modification is found at Ser-54. The Protein kinase 1 domain maps to 62–321 (FELLKVLGQG…AEEIKRHVFY (260 aa)). ATP-binding positions include 68–76 (LGQGSFGKV) and Lys-94. The Proton acceptor role is filled by Asp-187. Residue Ser-221 is modified to Phosphoserine; by PDPK1. Ser-307 is modified (phosphoserine). The AGC-kinase C-terminal domain maps to 322-391 (STIDWNKLYR…VATGLMEDDG (70 aa)). The residue at position 359 (Thr-359) is a Phosphothreonine. 2 positions are modified to phosphoserine: Ser-363 and Ser-369. Phosphoserine; by autocatalysis is present on Ser-380. Positions 418-675 (YVVKETIGVG…AKQVLQHPWV (258 aa)) constitute a Protein kinase 2 domain. ATP contacts are provided by residues 424–432 (IGVGSYSEC) and Lys-447. Asp-535 acts as the Proton acceptor in catalysis. Thr-573 is modified (phosphothreonine). Ser-732 bears the Phosphoserine mark.

Belongs to the protein kinase superfamily. AGC Ser/Thr protein kinase family. S6 kinase subfamily. In terms of assembly, forms a complex with either MAPK1/ERK2 or MAPK3/ERK1 in quiescent cells. Transiently dissociates following mitogenic stimulation. Interacts with ETV1/ER81 and FGFR1. As to quaternary structure, (Microbial infection) Interacts with Kaposi's sarcoma-associated herpesvirus/HHV-8 protein ORF45; this interaction allows RPS6KA1 activation. Mg(2+) serves as cofactor. In terms of processing, activated by phosphorylation at Ser-221 by PDPK1. Autophosphorylated on Ser-380, as part of the activation process. May be phosphorylated at Thr-359 and Ser-363 by MAPK1/ERK2 and MAPK3/ERK1. Post-translationally, N-terminal myristoylation results in an activated kinase in the absence of added growth factors.

The protein resides in the nucleus. It is found in the cytoplasm. The enzyme catalyses L-seryl-[protein] + ATP = O-phospho-L-seryl-[protein] + ADP + H(+). The catalysed reaction is L-threonyl-[protein] + ATP = O-phospho-L-threonyl-[protein] + ADP + H(+). With respect to regulation, upon extracellular signal or mitogen stimulation, phosphorylated at Thr-573 in the C-terminal kinase domain (CTKD) by MAPK1/ERK2 and MAPK3/ERK1. The activated CTKD then autophosphorylates Ser-380, allowing binding of PDPK1, which in turn phosphorylates Ser-221 in the N-terminal kinase domain (NTDK) leading to the full activation of the protein and subsequent phosphorylation of the substrates by the NTKD. In terms of biological role, serine/threonine-protein kinase that acts downstream of ERK (MAPK1/ERK2 and MAPK3/ERK1) signaling and mediates mitogenic and stress-induced activation of the transcription factors CREB1, ETV1/ER81 and NR4A1/NUR77, regulates translation through RPS6 and EIF4B phosphorylation, and mediates cellular proliferation, survival, and differentiation by modulating mTOR signaling and repressing pro-apoptotic function of BAD and DAPK1. In fibroblast, is required for EGF-stimulated phosphorylation of CREB1, which results in the subsequent transcriptional activation of several immediate-early genes. In response to mitogenic stimulation (EGF and PMA), phosphorylates and activates NR4A1/NUR77 and ETV1/ER81 transcription factors and the cofactor CREBBP. Upon insulin-derived signal, acts indirectly on the transcription regulation of several genes by phosphorylating GSK3B at 'Ser-9' and inhibiting its activity. Phosphorylates RPS6 in response to serum or EGF via an mTOR-independent mechanism and promotes translation initiation by facilitating assembly of the pre-initiation complex. In response to insulin, phosphorylates EIF4B, enhancing EIF4B affinity for the EIF3 complex and stimulating cap-dependent translation. Is involved in the mTOR nutrient-sensing pathway by directly phosphorylating TSC2 at 'Ser-1798', which potently inhibits TSC2 ability to suppress mTOR signaling, and mediates phosphorylation of RPTOR, which regulates mTORC1 activity and may promote rapamycin-sensitive signaling independently of the PI3K/AKT pathway. Also involved in feedback regulation of mTORC1 and mTORC2 by phosphorylating DEPTOR. Mediates cell survival by phosphorylating the pro-apoptotic proteins BAD and DAPK1 and suppressing their pro-apoptotic function. Promotes the survival of hepatic stellate cells by phosphorylating CEBPB in response to the hepatotoxin carbon tetrachloride (CCl4). Mediates induction of hepatocyte prolifration by TGFA through phosphorylation of CEBPB. Is involved in cell cycle regulation by phosphorylating the CDK inhibitor CDKN1B, which promotes CDKN1B association with 14-3-3 proteins and prevents its translocation to the nucleus and inhibition of G1 progression. Phosphorylates EPHA2 at 'Ser-897', the RPS6KA-EPHA2 signaling pathway controls cell migration. In response to mTORC1 activation, phosphorylates EIF4B at 'Ser-406' and 'Ser-422' which stimulates bicarbonate cotransporter SLC4A7 mRNA translation, increasing SLC4A7 protein abundance and function. Functionally, (Microbial infection) Promotes the late transcription and translation of viral lytic genes during Kaposi's sarcoma-associated herpesvirus/HHV-8 infection, when constitutively activated. This is Ribosomal protein S6 kinase alpha-1 (RPS6KA1) from Homo sapiens (Human).